The chain runs to 284 residues: Polyamine aminopropyltransferase (284 aa).

Residues 2–237 enclose the PABS domain; the sequence is ELWYTEEQTQ…GYWLFGFASK (236 aa). Residue glutamine 31 participates in S-methyl-5'-thioadenosine binding. The spermidine site is built by histidine 62 and aspartate 86. S-methyl-5'-thioadenosine contacts are provided by residues glutamate 106 and 137–138; that span reads DG. Aspartate 155 serves as the catalytic Proton acceptor. Position 155-158 (155-158) interacts with spermidine; that stretch reads DSTD. An S-methyl-5'-thioadenosine-binding site is contributed by proline 162.

It belongs to the spermidine/spermine synthase family. As to quaternary structure, homodimer or homotetramer.

The protein localises to the cytoplasm. The enzyme catalyses S-adenosyl 3-(methylsulfanyl)propylamine + putrescine = S-methyl-5'-thioadenosine + spermidine + H(+). The protein operates within amine and polyamine biosynthesis; spermidine biosynthesis; spermidine from putrescine: step 1/1. In terms of biological role, catalyzes the irreversible transfer of a propylamine group from the amino donor S-adenosylmethioninamine (decarboxy-AdoMet) to putrescine (1,4-diaminobutane) to yield spermidine. The sequence is that of Polyamine aminopropyltransferase from Alkaliphilus metalliredigens (strain QYMF).